Reading from the N-terminus, the 436-residue chain is ATP-dependent protease ATPase subunit HslU (436 aa).

Residues isoleucine 19, 61-65 (GVGKT), aspartate 249, glutamate 314, and arginine 386 each bind ATP.

It belongs to the ClpX chaperone family. HslU subfamily. A double ring-shaped homohexamer of HslV is capped on each side by a ring-shaped HslU homohexamer. The assembly of the HslU/HslV complex is dependent on binding of ATP.

The protein localises to the cytoplasm. Functionally, ATPase subunit of a proteasome-like degradation complex; this subunit has chaperone activity. The binding of ATP and its subsequent hydrolysis by HslU are essential for unfolding of protein substrates subsequently hydrolyzed by HslV. HslU recognizes the N-terminal part of its protein substrates and unfolds these before they are guided to HslV for hydrolysis. The sequence is that of ATP-dependent protease ATPase subunit HslU from Bartonella tribocorum (strain CIP 105476 / IBS 506).